The chain runs to 215 residues: MPPSPLTDIQVRYLGRRDYRETWSAMRRYTDERGPDTPDQLWVVSHPPVYTLGQAGRREHILDPGEIPVVETDRGGQVTYHGPGQIVLYPLLDLRRWGLGVRSLVSALEHTVISLLAGYGIASEARDDAPGVYVEGRKVASVGLRVRRGCSYHGLAVNVDVDLEPFLRINPCGYPGLEVTRLLDLGVPTPYERLEADLALHCLEAIVEYGNGGAA.

The 176-residue stretch at 35 to 210 (PDTPDQLWVV…HCLEAIVEYG (176 aa)) folds into the BPL/LPL catalytic domain. Residues 74 to 81 (RGGQVTYH), 141 to 143 (SVG), and 154 to 156 (GLA) each bind substrate. C172 serves as the catalytic Acyl-thioester intermediate.

The protein belongs to the LipB family.

The protein localises to the cytoplasm. The catalysed reaction is octanoyl-[ACP] + L-lysyl-[protein] = N(6)-octanoyl-L-lysyl-[protein] + holo-[ACP] + H(+). Its pathway is protein modification; protein lipoylation via endogenous pathway; protein N(6)-(lipoyl)lysine from octanoyl-[acyl-carrier-protein]: step 1/2. Catalyzes the transfer of endogenously produced octanoic acid from octanoyl-acyl-carrier-protein onto the lipoyl domains of lipoate-dependent enzymes. Lipoyl-ACP can also act as a substrate although octanoyl-ACP is likely to be the physiological substrate. In Alkalilimnicola ehrlichii (strain ATCC BAA-1101 / DSM 17681 / MLHE-1), this protein is Octanoyltransferase.